A 234-amino-acid polypeptide reads, in one-letter code: Leucyl/phenylalanyl-tRNA--protein transferase (234 aa).

Belongs to the L/F-transferase family.

The protein resides in the cytoplasm. The enzyme catalyses N-terminal L-lysyl-[protein] + L-leucyl-tRNA(Leu) = N-terminal L-leucyl-L-lysyl-[protein] + tRNA(Leu) + H(+). The catalysed reaction is N-terminal L-arginyl-[protein] + L-leucyl-tRNA(Leu) = N-terminal L-leucyl-L-arginyl-[protein] + tRNA(Leu) + H(+). It carries out the reaction L-phenylalanyl-tRNA(Phe) + an N-terminal L-alpha-aminoacyl-[protein] = an N-terminal L-phenylalanyl-L-alpha-aminoacyl-[protein] + tRNA(Phe). In terms of biological role, functions in the N-end rule pathway of protein degradation where it conjugates Leu, Phe and, less efficiently, Met from aminoacyl-tRNAs to the N-termini of proteins containing an N-terminal arginine or lysine. This chain is Leucyl/phenylalanyl-tRNA--protein transferase, found in Enterobacter sp. (strain 638).